Reading from the N-terminus, the 219-residue chain is Trafficking protein particle complex subunit 4 (219 aa).

It belongs to the TRAPP small subunits family. TRAPPC4 subfamily. As to quaternary structure, component of the multisubunit TRAPP (transport protein particle) complex, which includes at least TRAPPC2, TRAPPC2L, TRAPPC3, TRAPPC3L, TRAPPC4, TRAPPC5, TRAPPC8, TRAPPC9, TRAPPC10, TRAPPC11 and TRAPPC12. Interacts with SDC2. In terms of tissue distribution, widely expressed.

The protein localises to the postsynaptic cell membrane. It is found in the golgi apparatus membrane. The protein resides in the endoplasmic reticulum. It localises to the vesicle. Functionally, core component of the TRAPP complexes which has a function of guanine nucleotide exchange factor activity for Rab1 GTPase. Plays a role in vesicular transport from endoplasmic reticulum to Golgi and autophagy. May play a role in dendrite postsynaptic membrane trafficking. In Mus musculus (Mouse), this protein is Trafficking protein particle complex subunit 4.